The chain runs to 362 residues: Peptide chain release factor 1 (362 aa).

Gln-237 is subject to N5-methylglutamine.

Belongs to the prokaryotic/mitochondrial release factor family. Methylated by PrmC. Methylation increases the termination efficiency of RF1.

It is found in the cytoplasm. Peptide chain release factor 1 directs the termination of translation in response to the peptide chain termination codons UAG and UAA. This Aquifex aeolicus (strain VF5) protein is Peptide chain release factor 1 (prfA).